The chain runs to 472 residues: Tryptophan--tRNA ligase, cytoplasmic (472 aa).

Residues 9–65 (SPLELFNSIATQGELVRSLKAGNASKDEIDSAVKMLLSLKMSYKAAMGEDYKANCPP) enclose the WHEP-TRS domain. Lys155 carries the post-translational modification N6-succinyllysine. Residues 165-174 (PSSEAMHVGH) carry the 'HIGH' region motif. The short motif at 350–354 (KMSAS) is the 'KMSKS' region element. Phosphoserine is present on Ser352.

This sequence belongs to the class-I aminoacyl-tRNA synthetase family. In terms of assembly, homodimer. Interacts with oxidized form of GAPDH. Proteolytic cleavage generates 2 forms; T1-TrpRS and T2-TrpRS.

The protein localises to the cytoplasm. It carries out the reaction tRNA(Trp) + L-tryptophan + ATP = L-tryptophyl-tRNA(Trp) + AMP + diphosphate + H(+). Its function is as follows. Catalyzes the attachment of tryptophan to tRNA(Trp) in a two-step reaction: tryptophan is first activated by ATP to form Trp-AMP and then transferred to the acceptor end of the tRNA(Trp). Could also possess an angiostatic activity. This Pongo abelii (Sumatran orangutan) protein is Tryptophan--tRNA ligase, cytoplasmic (WARS1).